Here is a 239-residue protein sequence, read N- to C-terminus: MSLYRDEGVVLRTSKLAEADRIITVLTRDHGKIRAVAKGVRRTKSRFGARLEPFMRVDLLIAEGRSLDTVSQAESIAAYGAAIVGDYAAYEAANVIVETIDKLVGTERERMTDQYRLLIGALNALAKRAHAPQAIGCSYVMRALALAGWTPRLGTCVVCGAAAPAYLSIASGGVMCEADHTTDARRIAPSALGQFDALVHGDWTVLDAAPVERVVRELVEDWGEYYLERPIRSLRLIDS.

This sequence belongs to the RecO family.

In terms of biological role, involved in DNA repair and RecF pathway recombination. The chain is DNA repair protein RecO from Bifidobacterium longum subsp. infantis (strain ATCC 15697 / DSM 20088 / JCM 1222 / NCTC 11817 / S12).